Here is an 86-residue protein sequence, read N- to C-terminus: Exodeoxyribonuclease 7 small subunit (86 aa).

Belongs to the XseB family. As to quaternary structure, heterooligomer composed of large and small subunits.

The protein localises to the cytoplasm. The enzyme catalyses Exonucleolytic cleavage in either 5'- to 3'- or 3'- to 5'-direction to yield nucleoside 5'-phosphates.. In terms of biological role, bidirectionally degrades single-stranded DNA into large acid-insoluble oligonucleotides, which are then degraded further into small acid-soluble oligonucleotides. The protein is Exodeoxyribonuclease 7 small subunit of Xanthomonas euvesicatoria pv. vesicatoria (strain 85-10) (Xanthomonas campestris pv. vesicatoria).